We begin with the raw amino-acid sequence, 429 residues long: MRVLILGSGVIGTTTAWYLAQSGCEVTVVDRQPASGLETSYANAGQLSFGYTSPWAAPGVPGKAVKWLFEQHAPLSIRPTRDLRQLAWLSQMLRNCTAERYAVNKARMVRLSDYSRDCLNALRASTGLEFEGRQLGTTQLFRTQQQLDAAAQDIEVLAQYGVPYELLSPAQIAQYEPGLAGGGAQMAGALHLPEDQTGDCRLFTQRLADLATQAGVQFRYGQQIERLEHAGGEITGVQIDGRLVTADRYVLALGSYSADLLLSLGLHLPVYPLKGYSLTIPIVDAQRAPTSTVLDESYKIALTRFDERIRVGGMAEVAGFDLSLNPRRRATLEMVVNDLFPGAGDLAQAEFWTGLRPATPDGTPVVGATPYANLFLNTGHGTLGWTMACGSGRYLADLMQGRTPEIDTEGLDVFRYLSTRSTRPHREAA.

Position 3 to 17 (Val-3 to Trp-17) interacts with FAD.

This sequence belongs to the DadA oxidoreductase family. It depends on FAD as a cofactor.

The catalysed reaction is a D-alpha-amino acid + A + H2O = a 2-oxocarboxylate + AH2 + NH4(+). Its pathway is amino-acid degradation; D-alanine degradation; NH(3) and pyruvate from D-alanine: step 1/1. Its function is as follows. Oxidative deamination of D-amino acids. The sequence is that of D-amino acid dehydrogenase from Xanthomonas campestris pv. campestris (strain 8004).